Reading from the N-terminus, the 190-residue chain is Interferon alpha-7 (190 aa).

A signal peptide spans 1–23; the sequence is MARLCAFLMVLAVMSYWPTCCLG. 2 cysteine pairs are disulfide-bonded: C24–C122 and C52–C162. An N-linked (GlcNAc...) asparagine glycan is attached at N101.

The protein belongs to the alpha/beta interferon family.

The protein resides in the secreted. In terms of biological role, produced by macrophages, IFN-alpha have antiviral activities. Interferon stimulates the production of two enzymes: a protein kinase and an oligoadenylate synthetase. The chain is Interferon alpha-7 (Ifna7) from Mus musculus (Mouse).